Here is a 147-residue protein sequence, read N- to C-terminus: MKVLLIKDVKSLGKAGEVKEVKDGYGQNFLIAKGFAKAATHEVLKQYEAEQKKKAENLRFELANLEKLKEELSKITICIAKPVGANGSLFGGITKDEIAHALKEQKNIEIDKKSLECDTIKELGMHEISIKLGHAIHAKFKLEVKGE.

This sequence belongs to the bacterial ribosomal protein bL9 family.

Its function is as follows. Binds to the 23S rRNA. The chain is Large ribosomal subunit protein bL9 from Campylobacter lari (strain RM2100 / D67 / ATCC BAA-1060).